A 544-amino-acid chain; its full sequence is Chaperonin GroEL (544 aa).

ATP contacts are provided by residues Thr29–Pro32, Asp86–Thr90, Gly413, Asn476–Leu478, and Asp492.

The protein belongs to the chaperonin (HSP60) family. Forms a cylinder of 14 subunits composed of two heptameric rings stacked back-to-back. Interacts with the co-chaperonin GroES.

Its subcellular location is the cytoplasm. It catalyses the reaction ATP + H2O + a folded polypeptide = ADP + phosphate + an unfolded polypeptide.. Together with its co-chaperonin GroES, plays an essential role in assisting protein folding. The GroEL-GroES system forms a nano-cage that allows encapsulation of the non-native substrate proteins and provides a physical environment optimized to promote and accelerate protein folding. The chain is Chaperonin GroEL from Desulfitobacterium hafniense (strain DSM 10664 / DCB-2).